We begin with the raw amino-acid sequence, 340 residues long: tRNA N6-adenosine threonylcarbamoyltransferase (340 aa).

Fe cation is bound by residues His-111 and His-115. Residues 134–138 (LVSGG), Asp-167, Gly-180, and Asn-276 each bind substrate. Asp-304 contributes to the Fe cation binding site.

This sequence belongs to the KAE1 / TsaD family. The cofactor is Fe(2+).

It localises to the cytoplasm. It catalyses the reaction L-threonylcarbamoyladenylate + adenosine(37) in tRNA = N(6)-L-threonylcarbamoyladenosine(37) in tRNA + AMP + H(+). Functionally, required for the formation of a threonylcarbamoyl group on adenosine at position 37 (t(6)A37) in tRNAs that read codons beginning with adenine. Is involved in the transfer of the threonylcarbamoyl moiety of threonylcarbamoyl-AMP (TC-AMP) to the N6 group of A37, together with TsaE and TsaB. TsaD likely plays a direct catalytic role in this reaction. The polypeptide is tRNA N6-adenosine threonylcarbamoyltransferase (Helicobacter pylori (strain P12)).